Here is a 359-residue protein sequence, read N- to C-terminus: MNILTPVAERLPSREEAEEALAVLRRWATHTPASDVAALAPEAPALVYPDLSRAYPRTFTVDEAYKASLPDLQNGPASLIVGAKAVIQHVGISNFRLPIRYHTRDNGDLQLETSVTGTVSLEAEKKGINMSRIMRSFYAHAEQAFSFEVIERALEDYKRDLESFDARIQMRFSFPVKVPSLRSGLTGWQYYDIALELVDRGGVRKEIMHLDFVYSSTCPCSLELSEHARRERGQLATPHSQRSVARISVEVRQGKCLWFEDLLDLVRSAVPTETQVMVKREDEQAFAELNAANPIFVEDAARSFCQALQSDPRIGDFRVVASHQESLHSHDAVSVLTEGPTFAAESLDPRLFSSLYHVG.

This sequence belongs to the GTP cyclohydrolase IV family.

It carries out the reaction GTP + H2O = 7,8-dihydroneopterin 3'-triphosphate + formate + H(+). It participates in cofactor biosynthesis; 7,8-dihydroneopterin triphosphate biosynthesis; 7,8-dihydroneopterin triphosphate from GTP: step 1/1. Functionally, converts GTP to 7,8-dihydroneopterin triphosphate. This Cereibacter sphaeroides (strain ATCC 17029 / ATH 2.4.9) (Rhodobacter sphaeroides) protein is GTP cyclohydrolase FolE2.